A 545-amino-acid chain; its full sequence is Methionine--tRNA ligase (545 aa).

The short motif at 10–20 (PYANGSLHIGH) is the 'HIGH' region element. Positions 141, 144, 153, and 156 each coordinate Zn(2+). The 'KMSKS' region signature appears at 329-333 (KISTS). Residue Thr332 participates in ATP binding.

The protein belongs to the class-I aminoacyl-tRNA synthetase family. MetG type 1 subfamily. In terms of assembly, monomer. Zn(2+) is required as a cofactor.

Its subcellular location is the cytoplasm. It catalyses the reaction tRNA(Met) + L-methionine + ATP = L-methionyl-tRNA(Met) + AMP + diphosphate. In terms of biological role, is required not only for elongation of protein synthesis but also for the initiation of all mRNA translation through initiator tRNA(fMet) aminoacylation. The protein is Methionine--tRNA ligase of Streptococcus pneumoniae (strain 70585).